A 68-amino-acid chain; its full sequence is Palustrin-1c (68 aa).

The first 22 residues, M1–C22, serve as a signal peptide directing secretion. A propeptide spanning residues E23 to T39 is cleaved from the precursor. C62 and C68 are joined by a disulfide.

Expressed by the skin glands.

The protein resides in the secreted. In terms of biological role, antimicrobial peptide. This is Palustrin-1c from Odorrana versabilis (Chinese bamboo leaf odorous frog).